A 260-amino-acid polypeptide reads, in one-letter code: Malonyl-[acyl-carrier protein] O-methyltransferase (260 aa).

Belongs to the methyltransferase superfamily.

It catalyses the reaction malonyl-[ACP] + S-adenosyl-L-methionine = malonyl-[ACP] methyl ester + S-adenosyl-L-homocysteine. It functions in the pathway cofactor biosynthesis; biotin biosynthesis. Its function is as follows. Converts the free carboxyl group of a malonyl-thioester to its methyl ester by transfer of a methyl group from S-adenosyl-L-methionine (SAM). It allows to synthesize pimeloyl-ACP via the fatty acid synthetic pathway. This chain is Malonyl-[acyl-carrier protein] O-methyltransferase, found in Chlorobium phaeovibrioides (strain DSM 265 / 1930) (Prosthecochloris vibrioformis (strain DSM 265)).